A 290-amino-acid polypeptide reads, in one-letter code: Phosphate import ATP-binding protein PstB (290 aa).

The ABC transporter domain maps to 25 to 285; that stretch reads LEARNLDFYY…PKTRRARDYL (261 aa). 57 to 64 lines the ATP pocket; it reads GPSGCGKS.

Belongs to the ABC transporter superfamily. Phosphate importer (TC 3.A.1.7) family. In terms of assembly, the complex is composed of two ATP-binding proteins (PstB), two transmembrane proteins (PstC and PstA) and a solute-binding protein (PstS).

Its subcellular location is the cell inner membrane. It carries out the reaction phosphate(out) + ATP + H2O = ADP + 2 phosphate(in) + H(+). Functionally, part of the ABC transporter complex PstSACB involved in phosphate import. Responsible for energy coupling to the transport system. This Zymomonas mobilis subsp. mobilis (strain ATCC 31821 / ZM4 / CP4) protein is Phosphate import ATP-binding protein PstB.